Consider the following 917-residue polypeptide: Sensor histidine kinase GacS (917 aa).

Helical transmembrane passes span 11-31 and 168-188; these read VLLLTLLPTSLMALVLGGYFT and SLFASLLLIAAGLAGTALLAV. The HAMP domain maps to 192 to 244; sequence RTINNPLTQIKQAVAQLKDGNLETRLPPLGSQELDELASGINRMASTLQNAQE. In terms of domain architecture, Histidine kinase spans 291–512; sequence NMSHEIRTPL…EFWISLNLPK (222 aa). His294 carries the post-translational modification Phosphohistidine; by autocatalysis. Residues 668–787 enclose the Response regulatory domain; the sequence is RVLCVDDNPA…QLAQVVLKWT (120 aa). At Asp717 the chain carries 4-aspartylphosphate. Residues 824 to 917 form the HPt domain; it reads KADLAADMLA…RLAAEARTNA (94 aa). At His863 the chain carries Phosphohistidine.

Activation requires a sequential transfer of a phosphate group from a His in the primary transmitter domain, to an Asp in the receiver domain and to a His in the secondary transmitter domain.

Its subcellular location is the cell inner membrane. The catalysed reaction is ATP + protein L-histidine = ADP + protein N-phospho-L-histidine.. In terms of biological role, member of the two-component regulatory system GacA/GacS which controls the expression of secondary metabolites and extracellular products. Activates GacA by phosphorylation. GacA acts (probably primarily) by activating expression of CsrA1 and CsrA2 antagonist small RNAs (sRNA) RsmX, RsmY and RsmZ which bind to and prevent translation repression by CsrA1 and CsrA2. Involved in the regulation of secondary metabolism and in the synthesis of the antifungal factors cyanide, 2,4-diacetylphloroglucinol and pyoluteorin. Exercises positive post-transcriptional control over the hcnABC and aprA genes; acts upstream of CsrA2 (rsmA). Controls expression of CsrA1 and CsrA2 antagonist sRNAs RsmX, RsmY and probably RsmZ. Probably controls expression of csrA1 (rsmE) and csrA2. The sequence is that of Sensor histidine kinase GacS (gacS) from Pseudomonas protegens (strain DSM 19095 / LMG 27888 / CFBP 6595 / CHA0).